A 230-amino-acid chain; its full sequence is Extracellular deoxyribonuclease (230 aa).

The signal sequence occupies residues 1-20 (MFRPLLSLCLALLVSAPAHA).

Belongs to the EndA/NucM nuclease family.

The protein localises to the secreted. This is Extracellular deoxyribonuclease (dns) from Aeromonas hydrophila.